A 278-amino-acid chain; its full sequence is Pantothenate synthetase (278 aa).

Methionine 31–histidine 38 contributes to the ATP binding site. The active-site Proton donor is the histidine 38. A (R)-pantoate-binding site is contributed by glutamine 62. Glutamine 62 is a binding site for beta-alanine. Glycine 148–aspartate 151 contributes to the ATP binding site. Glutamine 154 provides a ligand contact to (R)-pantoate. Residues leucine 177 and methionine 185 to arginine 188 contribute to the ATP site.

This sequence belongs to the pantothenate synthetase family. As to quaternary structure, homodimer.

It is found in the cytoplasm. The enzyme catalyses (R)-pantoate + beta-alanine + ATP = (R)-pantothenate + AMP + diphosphate + H(+). The protein operates within cofactor biosynthesis; (R)-pantothenate biosynthesis; (R)-pantothenate from (R)-pantoate and beta-alanine: step 1/1. Its function is as follows. Catalyzes the condensation of pantoate with beta-alanine in an ATP-dependent reaction via a pantoyl-adenylate intermediate. In Acidiphilium cryptum (strain JF-5), this protein is Pantothenate synthetase.